We begin with the raw amino-acid sequence, 341 residues long: S-adenosylmethionine:tRNA ribosyltransferase-isomerase (341 aa).

This sequence belongs to the QueA family. Monomer.

It is found in the cytoplasm. The catalysed reaction is 7-aminomethyl-7-carbaguanosine(34) in tRNA + S-adenosyl-L-methionine = epoxyqueuosine(34) in tRNA + adenine + L-methionine + 2 H(+). The protein operates within tRNA modification; tRNA-queuosine biosynthesis. Transfers and isomerizes the ribose moiety from AdoMet to the 7-aminomethyl group of 7-deazaguanine (preQ1-tRNA) to give epoxyqueuosine (oQ-tRNA). The chain is S-adenosylmethionine:tRNA ribosyltransferase-isomerase from Caldanaerobacter subterraneus subsp. tengcongensis (strain DSM 15242 / JCM 11007 / NBRC 100824 / MB4) (Thermoanaerobacter tengcongensis).